The primary structure comprises 189 residues: Hypoxanthine/guanine phosphoribosyltransferase (189 aa).

This sequence belongs to the purine/pyrimidine phosphoribosyltransferase family. Archaeal HPRT subfamily. Homodimer.

It localises to the cytoplasm. The enzyme catalyses IMP + diphosphate = hypoxanthine + 5-phospho-alpha-D-ribose 1-diphosphate. It catalyses the reaction GMP + diphosphate = guanine + 5-phospho-alpha-D-ribose 1-diphosphate. It functions in the pathway purine metabolism; IMP biosynthesis via salvage pathway; IMP from hypoxanthine: step 1/1. Its function is as follows. Catalyzes a salvage reaction resulting in the formation of IMP that is energically less costly than de novo synthesis. This chain is Hypoxanthine/guanine phosphoribosyltransferase, found in Methanothrix soehngenii (strain ATCC 5969 / DSM 3671 / JCM 10134 / NBRC 103675 / OCM 69 / GP-6) (Methanosaeta concilii).